A 343-amino-acid chain; its full sequence is MSDNESDGPTKQSTEPVDNAWSLKIPTFKAEDNPHGLVEESSFATLFPKYREKYLKEVWPLVQQCVAEHHLKAELDLVEGSMVVKTTRKTWDPYIIIKSRDMIKLMARSVPFEQAKRVLQDDIGCDIIKIGNLVHKKEKFVKRRQRLIGPNGATLKSIELLTDCYVLVQGNTVSALGPYKGLQQVRDIVLETMNNVHPIYNIKALMIKRELMKDPKLANEDWSRFLPKFKNKNISKRKQPKNKKPKKEYTPFPPAQPESKIDKQLATGEYFLNKEQKQAKKQQERSVKQAEAAKKQDERRNKDFVPPTEDAPSQSRKRPAETSKVDVDALKAKLMKANKKNRS.

In terms of domain architecture, KH spans 126 to 194 (DIIKIGNLVH…VRDIVLETMN (69 aa)). Basic residues predominate over residues 230 to 246 (KNKNISKRKQPKNKKPK). Positions 230–343 (KNKNISKRKQ…LMKANKKNRS (114 aa)) are disordered. 2 stretches are compositionally biased toward basic and acidic residues: residues 272–303 (LNKE…RNKD) and 318–331 (RPAE…DALK). A coiled-coil region spans residues 272–341 (LNKEQKQAKK…AKLMKANKKN (70 aa)). Residues 333–343 (KLMKANKKNRS) show a composition bias toward basic residues.

The protein belongs to the KRR1 family. As to quaternary structure, monomer. Component of the ribosomal small subunit (SSU) processome.

Its subcellular location is the nucleus. The protein localises to the nucleolus. Required for 40S ribosome biogenesis. Involved in nucleolar processing of pre-18S ribosomal RNA and ribosome assembly. Binds to RNA. Required for female germline development, cell viability during eye development and for survival of dividing cells and epithelial cells during early wing disk development. This Drosophila virilis (Fruit fly) protein is KRR1 small subunit processome component homolog.